The primary structure comprises 454 residues: C4-dicarboxylate transport protein (454 aa).

9 helical membrane passes run 33 to 53, 66 to 86, 101 to 121, 148 to 168, 170 to 190, 210 to 230, 243 to 263, 354 to 374, and 377 to 397; these read VQVL…PDIG, LVKM…IAGM, IYFL…ANLV, EQSI…GAFA, GDIL…AIVG, LVAI…AFTI, MLIG…LGAV, LLLV…AGFI, and AATL…ILGI.

The protein belongs to the dicarboxylate/amino acid:cation symporter (DAACS) (TC 2.A.23) family.

It is found in the cell inner membrane. Responsible for the transport of dicarboxylates such as succinate, fumarate, and malate from the periplasm across the membrane. The protein is C4-dicarboxylate transport protein of Sinorhizobium medicae (strain WSM419) (Ensifer medicae).